The sequence spans 333 residues: MRYEVDKRRRIVRVTPERDEDLYFLYLLIDVGDVVRGWTVREYKPDGTKEGERVKMFLGIKVEALEYHKFRGSLRVRGPVVEVEEGIEGVKGRRHTFDIVAGREVEIEKGDEEALEAAEGVLEMAKGILPRILLVSVDDEEAAFAYVTALGVEVLYFLRNDARRGGEEGSLLDEFLAAVGKATENLRRRYNPDKVVLAGPHIILEHVARYVHGDRIPQSSGGLAGVYEFVRRGLYDAFKAEIGFSAYEKLLQLLATNSERVATGPKDVEEAASAGRIDALLVLDSFIKENPREVWAIISRAYKSRSKIFIIREDTEIGVGLRAMGGVAAILRW.

Belongs to the eukaryotic release factor 1 family. Pelota subfamily. Monomer. Requires a divalent metal cation as cofactor.

The protein localises to the cytoplasm. May function in recognizing stalled ribosomes, interact with stem-loop structures in stalled mRNA molecules, and effect endonucleolytic cleavage of the mRNA. May play a role in the release non-functional ribosomes and degradation of damaged mRNAs. Has endoribonuclease activity. This Pyrobaculum arsenaticum (strain DSM 13514 / JCM 11321 / PZ6) protein is Protein pelota homolog.